Here is a 276-residue protein sequence, read N- to C-terminus: Non-homologous end joining protein Ku (276 aa).

One can recognise a Ku domain in the interval 11–177 (ISFGLVHIPI…PEEIRSMEPL (167 aa)). The tract at residues 256–276 (QVKTQQKKEAAPKKERRRKTS) is disordered.

This sequence belongs to the prokaryotic Ku family. As to quaternary structure, homodimer. Interacts with LigD.

With LigD forms a non-homologous end joining (NHEJ) DNA repair enzyme, which repairs dsDNA breaks with reduced fidelity. Binds linear dsDNA with 5'- and 3'- overhangs but not closed circular dsDNA nor ssDNA. Recruits and stimulates the ligase activity of LigD. In Heliobacterium modesticaldum (strain ATCC 51547 / Ice1), this protein is Non-homologous end joining protein Ku.